The chain runs to 168 residues: G/U mismatch-specific DNA glycosylase (168 aa).

Belongs to the uracil-DNA glycosylase (UDG) superfamily. TDG/mug family. In terms of assembly, binds DNA as a monomer.

The protein localises to the cytoplasm. It carries out the reaction Specifically hydrolyzes mismatched double-stranded DNA and polynucleotides, releasing free uracil.. Excises ethenocytosine and uracil, which can arise by alkylation or deamination of cytosine, respectively, from the corresponding mispairs with guanine in ds-DNA. It is capable of hydrolyzing the carbon-nitrogen bond between the sugar-phosphate backbone of the DNA and the mispaired base. The complementary strand guanine functions in substrate recognition. Required for DNA damage lesion repair in stationary-phase cells. The protein is G/U mismatch-specific DNA glycosylase of Escherichia coli O139:H28 (strain E24377A / ETEC).